Here is a 214-residue protein sequence, read N- to C-terminus: Outer-membrane lipoprotein LolB (214 aa).

The N-terminal stretch at 1–25 (MNNLKRLTKTIFSCFTLSALLLLAG) is a signal peptide. C26 carries N-palmitoyl cysteine lipidation. C26 is lipidated: S-diacylglycerol cysteine. The segment covering 143 to 160 (QVIESDSQGKPKQLTNTQ) has biased composition (polar residues). The disordered stretch occupies residues 143-163 (QVIESDSQGKPKQLTNTQTPP).

Belongs to the LolB family. Monomer.

The protein resides in the cell outer membrane. Functionally, plays a critical role in the incorporation of lipoproteins in the outer membrane after they are released by the LolA protein. This chain is Outer-membrane lipoprotein LolB, found in Shewanella baltica (strain OS223).